Here is a 156-residue protein sequence, read N- to C-terminus: ATP synthase subunit b (156 aa).

A helical transmembrane segment spans residues 3–23 (INFTLLAQALAFAGLIWIIAT).

Belongs to the ATPase B chain family. F-type ATPases have 2 components, F(1) - the catalytic core - and F(0) - the membrane proton channel. F(1) has five subunits: alpha(3), beta(3), gamma(1), delta(1), epsilon(1). F(0) has three main subunits: a(1), b(2) and c(10-14). The alpha and beta chains form an alternating ring which encloses part of the gamma chain. F(1) is attached to F(0) by a central stalk formed by the gamma and epsilon chains, while a peripheral stalk is formed by the delta and b chains.

It is found in the cell membrane. Its function is as follows. F(1)F(0) ATP synthase produces ATP from ADP in the presence of a proton or sodium gradient. F-type ATPases consist of two structural domains, F(1) containing the extramembraneous catalytic core and F(0) containing the membrane proton channel, linked together by a central stalk and a peripheral stalk. During catalysis, ATP synthesis in the catalytic domain of F(1) is coupled via a rotary mechanism of the central stalk subunits to proton translocation. Component of the F(0) channel, it forms part of the peripheral stalk, linking F(1) to F(0). In Stenotrophomonas maltophilia (strain K279a), this protein is ATP synthase subunit b.